We begin with the raw amino-acid sequence, 242 residues long: Probable transcriptional regulatory protein BURPS1710b_1385 (242 aa).

This sequence belongs to the TACO1 family.

It is found in the cytoplasm. This chain is Probable transcriptional regulatory protein BURPS1710b_1385, found in Burkholderia pseudomallei (strain 1710b).